A 351-amino-acid chain; its full sequence is 3-hydroxy-4-methyl-anthranilyl-[aryl-carrier protein] 5-monooxygenase (351 aa).

Belongs to the aromatic-ring hydroxylase family. It depends on FAD as a cofactor.

The catalysed reaction is 3-hydroxy-4-methylanthranilyl-[aryl-carrier protein] + NADH + O2 + H(+) = 3,5-dihydroxy-4-methylanthranilyl-[aryl-carrier protein] + NAD(+) + H2O. It participates in antibiotic biosynthesis. In terms of biological role, involved in the biosynthesis of the antitumor antibiotic sibiromycin. Hydroxylates the C5 position of the peptidyl carrier protein (PCP)-bound 4-methyl-3-hydroxyanthranilic acid (4-MHA or 3H4MAA), leading to the formation of the fully substituted anthranilate moiety found in sibiromycin. The protein is 3-hydroxy-4-methyl-anthranilyl-[aryl-carrier protein] 5-monooxygenase of Streptosporangium sibiricum.